Consider the following 422-residue polypeptide: Dihydrolipoyllysine-residue succinyltransferase component of 2-oxoglutarate dehydrogenase complex (422 aa).

The region spanning 1 to 76 (MPEVKVPELA…EVGQAIAVIG (76 aa)) is the Lipoyl-binding domain. Lys-42 is subject to N6-lipoyllysine. Residues 77 to 184 (EGSGNASKEN…APAKEEKKYN (108 aa)) are disordered. Composition is skewed to polar residues over residues 80-94 (GNASKENSNDNTPQQ) and 114-130 (EVNQTNDYNQQRVNATP). The Peripheral subunit-binding (PSBD) domain occupies 127–163 (NATPSARRYARENGVNLAEVSPKTNDVVRKEDIDKKQ). The span at 152–163 (DVVRKEDIDKKQ) shows a compositional bias: basic and acidic residues. Residues 164 to 176 (QAPASTQTTQQAP) show a composition bias toward low complexity. Active-site residues include His-393 and Asp-397.

This sequence belongs to the 2-oxoacid dehydrogenase family. Forms a 24-polypeptide structural core with octahedral symmetry. Part of the 2-oxoglutarate dehydrogenase (OGDH) complex composed of E1 (2-oxoglutarate dehydrogenase), E2 (dihydrolipoamide succinyltransferase) and E3 (dihydrolipoamide dehydrogenase); the complex contains multiple copies of the three enzymatic components (E1, E2 and E3). It depends on (R)-lipoate as a cofactor.

It catalyses the reaction N(6)-[(R)-dihydrolipoyl]-L-lysyl-[protein] + succinyl-CoA = N(6)-[(R)-S(8)-succinyldihydrolipoyl]-L-lysyl-[protein] + CoA. It functions in the pathway amino-acid degradation; L-lysine degradation via saccharopine pathway; glutaryl-CoA from L-lysine: step 6/6. In terms of biological role, E2 component of the 2-oxoglutarate dehydrogenase (OGDH) complex which catalyzes the second step in the conversion of 2-oxoglutarate to succinyl-CoA and CO(2). In Staphylococcus aureus (strain bovine RF122 / ET3-1), this protein is Dihydrolipoyllysine-residue succinyltransferase component of 2-oxoglutarate dehydrogenase complex (odhB).